Reading from the N-terminus, the 589-residue chain is MAVRSPFVVVMGHVDVGKTLLLDKIRGTSVAYREPGMITQHIGMSFVPWQAVEKYAGPLVDRLKLRGKIWIPGFLFIDTPGHAAFSNLRKRGGSVADLAILVVDITSGLEDQGVESLKLIQSRGVPFVIAANKLDRVYGWKSVENRPFLTAVEDQEWHAIATLEESIGKLVEQLSKLGVEADRYDRVRDFGRQVPIVPTSAVTGEGIADLLLVLAGVSQRFIPRDKLTVRPGPARGVVMEVKEERGLGVVADAILYDGVLKKGDTVVTAGIDGPRVAKVRMLVMPKPLEEMRDPEDRYMAVEEVKAAAGVRIVADGLEGVVAGAPLMAVRDPGEVQEAVKVVGEEISEIKIETDREGVIVRADTFGTLESTVLFLRQQGVPIRKADVGPPTHKDVVEAVLSRRKNPAYGVILAFNVKTPPEVEKEAMSSGVKIIRGEILYRIFDEYIKWSQEVKTKTVEQILSQMTRPGKIQILPGYVFRRSNPAIVGVKVLAGTIKPGVTLVKDGKEVGRVMQIQKSGKPVGEAAAGDEVAVSIQGDVMVGRQIKEGDVLYVYVPDEQARQWLFQYKQYLREDELKALEEFLKAGRRR.

In terms of domain architecture, tr-type G spans 3–224 (VRSPFVVVMG…AGVSQRFIPR (222 aa)). Residues 12-19 (GHVDVGKT) are G1. A GTP-binding site is contributed by 12-19 (GHVDVGKT). Residues 37–41 (MITQH) are G2. Residues 78-81 (DTPG) form a G3 region. Residues 78-82 (DTPGH) and 132-135 (NKLD) each bind GTP. The tract at residues 132-135 (NKLD) is G4. Residues 200-202 (SAV) are G5.

The protein belongs to the TRAFAC class translation factor GTPase superfamily. Classic translation factor GTPase family. IF-2 subfamily.

Functionally, function in general translation initiation by promoting the binding of the formylmethionine-tRNA to ribosomes. Seems to function along with eIF-2. This Pyrobaculum neutrophilum (strain DSM 2338 / JCM 9278 / NBRC 100436 / V24Sta) (Thermoproteus neutrophilus) protein is Probable translation initiation factor IF-2.